The chain runs to 314 residues: Type II methyltransferase M.HpaI (314 aa).

This sequence belongs to the N(4)/N(6)-methyltransferase family.

It carries out the reaction a 2'-deoxyadenosine in DNA + S-adenosyl-L-methionine = an N(6)-methyl-2'-deoxyadenosine in DNA + S-adenosyl-L-homocysteine + H(+). In terms of biological role, a beta subtype methylase that recognizes the double-stranded sequence 5'-GTTAAC-3', methylates A-5 on both strands, and protects the DNA from cleavage by the HpaI endonuclease. This is Type II methyltransferase M.HpaI (hpaIM) from Haemophilus parainfluenzae.